Consider the following 215-residue polypeptide: MKIIEVDEELYQYIASQTKSIGESASDILRRLLNLPVSGVNLTAVDLTQSTMNSTNEEKGTQLPAEKNVVAETPKPSSEQEIRTPARKQSTQSIQHIVTKVKNLLQSEAFQEESKMVVRFLNILSVLYRTNPESFAQATEQETSQGRTRTYYARDEATLLAAGNHTKPRQIPDTPYWVITNTNSGRKMLMLERTMQFMELPEELIDEVRPYFAVV.

Residues 71-93 (AETPKPSSEQEIRTPARKQSTQS) are disordered. Residues 181–187 (NTNSGRK) are interaction with DNA.

This sequence belongs to the SeqA family. In terms of assembly, homodimer. Polymerizes to form helical filaments.

The protein resides in the cytoplasm. In terms of biological role, negative regulator of replication initiation, which contributes to regulation of DNA replication and ensures that replication initiation occurs exactly once per chromosome per cell cycle. Binds to pairs of hemimethylated GATC sequences in the oriC region, thus preventing assembly of replication proteins and re-initiation at newly replicated origins. Repression is relieved when the region becomes fully methylated. In Mannheimia succiniciproducens (strain KCTC 0769BP / MBEL55E), this protein is Negative modulator of initiation of replication.